Consider the following 282-residue polypeptide: Trihydroxynaphthalene reductase PfmaI (282 aa).

Positions 41, 114, and 147 each coordinate NADP(+). Residues Ser-164 and Tyr-178 each act as proton donor in the active site. The NADP(+) site is built by Tyr-178, Lys-182, Ile-211, and Thr-213. The Lowers pKa of active site Tyr role is filled by Lys-182.

The protein belongs to the short-chain dehydrogenases/reductases (SDR) family.

The protein operates within pigment biosynthesis; melanin biosynthesis. Trihydroxynaphthalene reductase involved the biosynthesis of dihydroxynaphthalene (DHN)-melanin, a bluish-green pigment forming a dark layer in the conidial wall that protects the conidia from UV radiations. The first step of the pathway is the production of the pentaketide 1,3,6,8-tetrahydroxynaphthalene (1,3,6,8-THN or T4HN) by the polyketide synthase PfmaE though condensation of acetyl-CoA with malonyl-CoA. T4HN is not stable and easily oxidizes into the stable form flaviolin. T4HN is also substrate of the hydroxynaphthalene reductase PfmaG to yield scytalone. The scytalone dehydratase PfmaJ then reduces scytalone to 1,3,8-THN. 1,3,8-THN is then substrate of the hydroxynaphthalene reductase PfmaI to yield vermelone. Vermelone is further converted by the multicopper oxidase PfmaD to 1,8-DHN. Finally the laccase PFICI_06862 transforms 1,8-DHN to DHN-melanin. The roles of the 5-oxoprolinase PfmaA and the proline iminopeptidase PfmaB within the cluster have not been elucidated yet. The polypeptide is Trihydroxynaphthalene reductase PfmaI (Pestalotiopsis fici (strain W106-1 / CGMCC3.15140)).